A 295-amino-acid polypeptide reads, in one-letter code: Pyridoxal 5'-phosphate synthase subunit PdxS (295 aa).

Asp-25 is a D-ribose 5-phosphate binding site. Catalysis depends on Lys-82, which acts as the Schiff-base intermediate with D-ribose 5-phosphate. Gly-154 lines the D-ribose 5-phosphate pocket. Residue Arg-166 participates in D-glyceraldehyde 3-phosphate binding. D-ribose 5-phosphate-binding positions include Gly-215 and 236 to 237 (GS).

This sequence belongs to the PdxS/SNZ family. As to quaternary structure, in the presence of PdxT, forms a dodecamer of heterodimers.

It carries out the reaction aldehydo-D-ribose 5-phosphate + D-glyceraldehyde 3-phosphate + L-glutamine = pyridoxal 5'-phosphate + L-glutamate + phosphate + 3 H2O + H(+). The protein operates within cofactor biosynthesis; pyridoxal 5'-phosphate biosynthesis. Its function is as follows. Catalyzes the formation of pyridoxal 5'-phosphate from ribose 5-phosphate (RBP), glyceraldehyde 3-phosphate (G3P) and ammonia. The ammonia is provided by the PdxT subunit. Can also use ribulose 5-phosphate and dihydroxyacetone phosphate as substrates, resulting from enzyme-catalyzed isomerization of RBP and G3P, respectively. The polypeptide is Pyridoxal 5'-phosphate synthase subunit PdxS (Staphylococcus saprophyticus subsp. saprophyticus (strain ATCC 15305 / DSM 20229 / NCIMB 8711 / NCTC 7292 / S-41)).